A 245-amino-acid chain; its full sequence is 8-amino-3,8-dideoxy-manno-octulosonate cytidylyltransferase (245 aa).

It belongs to the KdsB family.

The protein localises to the cytoplasm. The enzyme catalyses 8-amino-3,8-dideoxy-alpha-D-manno-octulosonate + CTP = CMP-8-amino-3,8-dideoxy-alpha-D-manno-oct-2-ulosonate + diphosphate. Its pathway is bacterial outer membrane biogenesis; lipopolysaccharide biosynthesis. Activates KDO8N (a required 8-carbon sugar) for incorporation into bacterial lipopolysaccharide in the Shewanella genus. This chain is 8-amino-3,8-dideoxy-manno-octulosonate cytidylyltransferase, found in Shewanella halifaxensis (strain HAW-EB4).